A 600-amino-acid chain; its full sequence is MSTAIYYSTHNNMHTNDDITNGSGSTTSGNPGANPSNPNHTNAGATINNNSNIGLNSANKNHTTLLPSLAHIMPSNSNNTTNSGSSIDISSTLINPYSSGAAAAAAAVGGGNGGYYHPPPPHSQQQQQQQFDTSYSNQTTPTSAYTNFNNDSTHSPTDISMQQNMNNLASSSGNMSIGGGIDGNFSHNNNNNNNNNNNNNNKCICKSKVNKIPRPRNAFILFRQKYHQMVLDEGTVIRTNPEVSRELGRRWRGLSPQEKEHWNNLAEEEKKNHAKKYPGYRYTPRRNGRNKNCPVCKNKPLPNNKSNSISGMSGSGGGGGSISGASSLSGGLTSRDNSITNANAIDYQQQQLQQQQQQQQQQAIQFQSLPPDQYQQLIKQQQQQLQLQAQLNGGGGGGGITSNPQTIPQYITNGNYPSYIISPNPYSTTSTTAPTTTTTTTTNASSIGLSVPPTATTTSTSSQPTSANSQLHFYEAEKLSPVSSTHHQSSISEIAAQQQQQQQQQQFMYNTNYSTIPPNNTTTMQQHSAGTGNDYSLNGNNSGNTGYDNRYGYGQPMIITGQSQQGLQVQQQGQHYNSGLHAAQHYQQQQQQHHQQQPPQ.

Polar residues predominate over residues 1–14 (MSTAIYYSTHNNMH). Disordered regions lie at residues 1 to 59 (MSTA…NSAN), 112 to 160 (NGGY…TDIS), 180 to 200 (GIDGNFSHNNNNNNNNNNNNN), 266 to 337 (AEEE…SRDN), 427 to 549 (STTS…GYDN), and 564 to 600 (QQGLQVQQQGQHYNSGLHAAQHYQQQQQQHHQQQPPQ). Composition is skewed to low complexity over residues 20-39 (TNGSGSTTSGNPGANPSNPN) and 47-59 (INNNSNIGLNSAN). The segment covering 131 to 160 (FDTSYSNQTTPTSAYTNFNNDSTHSPTDIS) has biased composition (polar residues). The segment covering 188–200 (NNNNNNNNNNNNN) has biased composition (low complexity). The HMG box DNA-binding region spans 212–281 (IPRPRNAFIL…NHAKKYPGYR (70 aa)). The span at 272–289 (NHAKKYPGYRYTPRRNGR) shows a compositional bias: basic residues. Residues 297 to 312 (KNKPLPNNKSNSISGM) show a composition bias toward low complexity. Positions 313 to 322 (SGSGGGGGSI) are enriched in gly residues. Residues 427 to 470 (STTSTTAPTTTTTTTTNASSIGLSVPPTATTTSTSSQPTSANSQ) show a composition bias toward low complexity. Residues 481 to 496 (PVSSTHHQSSISEIAA) show a composition bias toward polar residues. A compositionally biased stretch (low complexity) spans 497-506 (QQQQQQQQQQ). Residues 507-547 (FMYNTNYSTIPPNNTTTMQQHSAGTGNDYSLNGNNSGNTGY) are compositionally biased toward polar residues. Composition is skewed to low complexity over residues 564–574 (QQGLQVQQQGQ) and 581–600 (HAAQHYQQQQQQHHQQQPPQ).

The protein resides in the nucleus. Transcription regulator that functions in both the positive and negative regulation of filamentous growth, depending upon the environmental conditions. Recruits the TUP1/SSN6 general repression complex to achieve repression. Regulates genes encoding cell wall components that are specifically expressed in the filamentous forms such as HWP1, RBT1, HYR1, ECE1, ALS1, RBT4 and RBT5. The sequence is that of Repressor of filamentous growth 1 (RFG1) from Candida albicans (strain SC5314 / ATCC MYA-2876) (Yeast).